Consider the following 587-residue polypeptide: Aspartate--tRNA ligase (587 aa).

Residue Glu-174 coordinates L-aspartate. Residues 198-201 (QITK) form an aspartate region. Arg-220 contributes to the L-aspartate binding site. Residues 220–222 (RDE) and Gln-229 contribute to the ATP site. Residue His-443 participates in L-aspartate binding. Glu-477 contacts ATP. Residue Arg-484 participates in L-aspartate binding. Residue 529–532 (GLDR) coordinates ATP.

This sequence belongs to the class-II aminoacyl-tRNA synthetase family. Type 1 subfamily. In terms of assembly, homodimer.

The protein localises to the cytoplasm. The enzyme catalyses tRNA(Asp) + L-aspartate + ATP = L-aspartyl-tRNA(Asp) + AMP + diphosphate. Catalyzes the attachment of L-aspartate to tRNA(Asp) in a two-step reaction: L-aspartate is first activated by ATP to form Asp-AMP and then transferred to the acceptor end of tRNA(Asp). The chain is Aspartate--tRNA ligase from Streptococcus pneumoniae (strain ATCC 700669 / Spain 23F-1).